We begin with the raw amino-acid sequence, 427 residues long: Steroid C26-monooxygenase (427 aa).

Cysteine 360 contributes to the heme binding site.

Belongs to the cytochrome P450 family. The cofactor is heme.

The enzyme catalyses cholest-4-en-3-one + 6 reduced [2Fe-2S]-[ferredoxin] + 3 O2 + 5 H(+) = (25S)-3-oxocholest-4-en-26-oate + 6 oxidized [2Fe-2S]-[ferredoxin] + 4 H2O. Its pathway is steroid metabolism; cholesterol degradation. Functionally, involved in the utilization of cholesterol as the sole carbon and energy source by degrading the side chain. Primarily catalyzes the sequential oxidation of the terminal methyl of cholest-4-en-3-one into (25S)-26-hydroxycholest-4-en-3-one (alcohol), (25S)-26-oxocholest-4-en-3-one (aldehyde), to finally yield the carboxylic acid (25S)-3-oxocholest-4-en-26-oate. Also able to sequentially oxidize cholesterol itself, not only cholest-4-en-3-one. The sequence is that of Steroid C26-monooxygenase from Mycolicibacterium smegmatis (strain ATCC 700084 / mc(2)155) (Mycobacterium smegmatis).